The primary structure comprises 103 residues: Large ribosomal subunit protein bL21 (103 aa).

It belongs to the bacterial ribosomal protein bL21 family. Part of the 50S ribosomal subunit. Contacts protein L20.

Its function is as follows. This protein binds to 23S rRNA in the presence of protein L20. This chain is Large ribosomal subunit protein bL21, found in Vesicomyosocius okutanii subsp. Calyptogena okutanii (strain HA).